The sequence spans 420 residues: Protein phosphatase methylesterase 1 (420 aa).

Low complexity-rich tracts occupy residues 18–28 (PEAPLLSESSS) and 42–51 (SSVSSTGTVI). The interval 18 to 51 (PEAPLLSESSSMNHPAESSHDEDSSSVSSTGTVI) is disordered. Residues serine 197, aspartate 223, and histidine 354 contribute to the active site.

It belongs to the AB hydrolase superfamily.

The catalysed reaction is [phosphatase 2A protein]-C-terminal L-leucine methyl ester + H2O = [phosphatase 2A protein]-C-terminal L-leucine + methanol + H(+). Its function is as follows. Demethylates proteins that have been reversibly carboxymethylated. Demethylates the phosphatase PP2A catalytic subunit. The protein is Protein phosphatase methylesterase 1 (ppe1) of Aspergillus fumigatus (strain ATCC MYA-4609 / CBS 101355 / FGSC A1100 / Af293) (Neosartorya fumigata).